The chain runs to 368 residues: tRNA-specific 2-thiouridylase MnmA (368 aa).

ATP is bound by residues 12–19 (AMSGGVDS) and Met38. The Nucleophile role is filled by Cys110. An intrachain disulfide couples Cys110 to Cys207. Gly134 provides a ligand contact to ATP. Positions 157–159 (KDQ) are interaction with tRNA. Cys207 functions as the Cysteine persulfide intermediate in the catalytic mechanism. The segment at 312–313 (RY) is interaction with tRNA.

Belongs to the MnmA/TRMU family.

It is found in the cytoplasm. The enzyme catalyses S-sulfanyl-L-cysteinyl-[protein] + uridine(34) in tRNA + AH2 + ATP = 2-thiouridine(34) in tRNA + L-cysteinyl-[protein] + A + AMP + diphosphate + H(+). Its function is as follows. Catalyzes the 2-thiolation of uridine at the wobble position (U34) of tRNA, leading to the formation of s(2)U34. This chain is tRNA-specific 2-thiouridylase MnmA, found in Geobacter metallireducens (strain ATCC 53774 / DSM 7210 / GS-15).